The primary structure comprises 163 residues: Transcriptional repressor NrdR (163 aa).

The segment at 3-34 (CPFCRHDDSRVVDSRTTDDGSSIRRRRQCPNC) is a zinc-finger region. In terms of domain architecture, ATP-cone spans 46–136 (LSVIKRSGAP…VYQAFDSLAD (91 aa)).

Belongs to the NrdR family. Zn(2+) is required as a cofactor.

In terms of biological role, negatively regulates transcription of bacterial ribonucleotide reductase nrd genes and operons by binding to NrdR-boxes. The protein is Transcriptional repressor NrdR of Kineococcus radiotolerans (strain ATCC BAA-149 / DSM 14245 / SRS30216).